A 369-amino-acid polypeptide reads, in one-letter code: Anhydro-N-acetylmuramic acid kinase (369 aa).

Residue 12–19 (GTSLDGVD) participates in ATP binding.

The protein belongs to the anhydro-N-acetylmuramic acid kinase family.

The enzyme catalyses 1,6-anhydro-N-acetyl-beta-muramate + ATP + H2O = N-acetyl-D-muramate 6-phosphate + ADP + H(+). Its pathway is amino-sugar metabolism; 1,6-anhydro-N-acetylmuramate degradation. It functions in the pathway cell wall biogenesis; peptidoglycan recycling. Functionally, catalyzes the specific phosphorylation of 1,6-anhydro-N-acetylmuramic acid (anhMurNAc) with the simultaneous cleavage of the 1,6-anhydro ring, generating MurNAc-6-P. Is required for the utilization of anhMurNAc either imported from the medium or derived from its own cell wall murein, and thus plays a role in cell wall recycling. The sequence is that of Anhydro-N-acetylmuramic acid kinase from Actinobacillus pleuropneumoniae serotype 3 (strain JL03).